The primary structure comprises 163 residues: Lipoprotein signal peptidase (163 aa).

The next 3 helical transmembrane spans lie at 3-23 (IPLIYNRILILFFFIANIIIL), 70-90 (NYILCLISSIAILIILKTMYN), and 94-114 (IENFFYNIPSAFIISGAIGNF). Residues D125 and D143 contribute to the active site. A helical membrane pass occupies residues 134–154 (WHFATFNIADVSIFIGSVLFI).

The protein belongs to the peptidase A8 family.

It localises to the cell membrane. It carries out the reaction Release of signal peptides from bacterial membrane prolipoproteins. Hydrolyzes -Xaa-Yaa-Zaa-|-(S,diacylglyceryl)Cys-, in which Xaa is hydrophobic (preferably Leu), and Yaa (Ala or Ser) and Zaa (Gly or Ala) have small, neutral side chains.. It functions in the pathway protein modification; lipoprotein biosynthesis (signal peptide cleavage). In terms of biological role, this protein specifically catalyzes the removal of signal peptides from prolipoproteins. The sequence is that of Lipoprotein signal peptidase from Buchnera aphidicola subsp. Baizongia pistaciae (strain Bp).